A 214-amino-acid chain; its full sequence is Exosome complex component RRP46 homolog (214 aa).

Belongs to the RNase PH family. In terms of assembly, homodimer. Component of the RNA exosome complex. Interacts with crn-4; interaction promotes the DNase activity of crn-4. Interacts with crn-3, cps-6 and cyn-13.

Its subcellular location is the cytoplasm. It localises to the nucleus. In terms of biological role, non-catalytic component of the RNA exosome complex which has 3'-&gt;5' exoribonuclease activity and participates in a multitude of cellular RNA processing and degradation events. Involved in apoptotic DNA degradation. In vitro, does not bind or digest single-stranded RNA. In vitro, binds to double-stranded DNA without detectable DNase activity. The protein is Exosome complex component RRP46 homolog of Caenorhabditis elegans.